Here is a 734-residue protein sequence, read N- to C-terminus: Sulfate transporter (734 aa).

Basic and acidic residues predominate over residues 1–18 (MSLKNEDQNDLSPKDSVK). The segment at 1–38 (MSLKNEDQNDLSPKDSVKGNDQYRAPSGIHLEPEEESR) is disordered. Ser12 and Ser16 each carry phosphoserine. Helical transmembrane passes span 113-133 (VMSG…YSLL) and 138-158 (PIYG…LGTS). Residue Asn194 is glycosylated (N-linked (GlcNAc...) asparagine). The next 6 membrane-spanning stretches (helical) occupy residues 214–234 (IIVG…MGFF), 237–257 (GFVS…GASF), 379–399 (VDAI…SEMF), 415–435 (AIGF…SAAL), 453–473 (VMTA…FFSL), and 519–539 (LIST…CVIL). Positions 563–714 (AYKNLQAKSG…YSIYEAMTFA (152 aa)) constitute an STAS domain.

The protein belongs to the SLC26A/SulP transporter (TC 2.A.53) family. N-glycosylated.

Its subcellular location is the cell membrane. The protein resides in the apical cell membrane. The enzyme catalyses oxalate(in) + sulfate(out) = oxalate(out) + sulfate(in). It catalyses the reaction sulfate(out) + 2 chloride(in) = sulfate(in) + 2 chloride(out). The catalysed reaction is oxalate(out) + 2 chloride(in) = oxalate(in) + 2 chloride(out). It carries out the reaction bromide(in) + chloride(out) = bromide(out) + chloride(in). The enzyme catalyses nitrate(in) + chloride(out) = nitrate(out) + chloride(in). It catalyses the reaction iodide(in) + chloride(out) = iodide(out) + chloride(in). Its function is as follows. Sulfate transporter which mediates sulfate uptake into chondrocytes in order to maintain adequate sulfation of proteoglycans which is needed for cartilage development. Mediates electroneutral anion exchange of sulfate ions for oxalate ions, sulfate and oxalate ions for chloride and/or hydroxyl ions and chloride ions for bromide, iodide and nitrate ions. The coupling of sulfate transport to both hydroxyl and chloride ions likely serves to ensure transport at both acidic pH when most sulfate uptake is mediated by sulfate-hydroxide exchange and alkaline pH when most sulfate uptake is mediated by sulfate-chloride exchange. Essential for chondrocyte proliferation, differentiation and cell size expansion. This chain is Sulfate transporter (SLC26A2), found in Bos taurus (Bovine).